The primary structure comprises 401 residues: Enoyl-[acyl-carrier-protein] reductase [NADH] (401 aa).

Residues 48 to 53, 74 to 75, 111 to 112, and 140 to 141 contribute to the NAD(+) site; these read GASSGY, FE, DA, and LA. Tyr226 provides a ligand contact to substrate. Tyr236 functions as the Proton donor in the catalytic mechanism. NAD(+) contacts are provided by residues Lys245 and 274-276; that span reads VVT.

Belongs to the TER reductase family. As to quaternary structure, monomer.

The enzyme catalyses a 2,3-saturated acyl-[ACP] + NAD(+) = a (2E)-enoyl-[ACP] + NADH + H(+). The protein operates within lipid metabolism; fatty acid biosynthesis. Functionally, involved in the final reduction of the elongation cycle of fatty acid synthesis (FAS II). Catalyzes the reduction of a carbon-carbon double bond in an enoyl moiety that is covalently linked to an acyl carrier protein (ACP). This Xylella fastidiosa (strain Temecula1 / ATCC 700964) protein is Enoyl-[acyl-carrier-protein] reductase [NADH].